Here is a 385-residue protein sequence, read N- to C-terminus: Putative non-inhibitory serpin-Z11 (385 aa).

The RCL stretch occupies residues Gly324 to Pro348.

It belongs to the serpin family.

The sequence is that of Putative non-inhibitory serpin-Z11 from Oryza sativa subsp. japonica (Rice).